The chain runs to 371 residues: Flagellar P-ring protein (371 aa).

The N-terminal stretch at 1–24 (MSIRVLLFSIFTGFLLAAAGPALA) is a signal peptide. The span at 301–321 (PQPFSSGTTATQPQTDISAQK) shows a compositional bias: polar residues. A disordered region spans residues 301–322 (PQPFSSGTTATQPQTDISAQKT).

Belongs to the FlgI family. As to quaternary structure, the basal body constitutes a major portion of the flagellar organelle and consists of four rings (L,P,S, and M) mounted on a central rod.

The protein localises to the periplasm. Its subcellular location is the bacterial flagellum basal body. Assembles around the rod to form the L-ring and probably protects the motor/basal body from shearing forces during rotation. This chain is Flagellar P-ring protein, found in Allorhizobium ampelinum (strain ATCC BAA-846 / DSM 112012 / S4) (Agrobacterium vitis (strain S4)).